Reading from the N-terminus, the 389-residue chain is Lipid-A-disaccharide synthase (389 aa).

Belongs to the LpxB family.

The enzyme catalyses a lipid X + a UDP-2-N,3-O-bis[(3R)-3-hydroxyacyl]-alpha-D-glucosamine = a lipid A disaccharide + UDP + H(+). The protein operates within bacterial outer membrane biogenesis; LPS lipid A biosynthesis. Its function is as follows. Condensation of UDP-2,3-diacylglucosamine and 2,3-diacylglucosamine-1-phosphate to form lipid A disaccharide, a precursor of lipid A, a phosphorylated glycolipid that anchors the lipopolysaccharide to the outer membrane of the cell. The protein is Lipid-A-disaccharide synthase of Burkholderia cenocepacia (strain ATCC BAA-245 / DSM 16553 / LMG 16656 / NCTC 13227 / J2315 / CF5610) (Burkholderia cepacia (strain J2315)).